The sequence spans 252 residues: Probable transcriptional regulatory protein HNE_0161 (252 aa).

It belongs to the TACO1 family.

The protein resides in the cytoplasm. In Hyphomonas neptunium (strain ATCC 15444), this protein is Probable transcriptional regulatory protein HNE_0161.